A 360-amino-acid chain; its full sequence is Lipid-A-disaccharide synthase (360 aa).

Belongs to the LpxB family.

The enzyme catalyses a lipid X + a UDP-2-N,3-O-bis[(3R)-3-hydroxyacyl]-alpha-D-glucosamine = a lipid A disaccharide + UDP + H(+). It participates in bacterial outer membrane biogenesis; LPS lipid A biosynthesis. Condensation of UDP-2,3-diacylglucosamine and 2,3-diacylglucosamine-1-phosphate to form lipid A disaccharide, a precursor of lipid A, a phosphorylated glycolipid that anchors the lipopolysaccharide to the outer membrane of the cell. In Helicobacter pylori (strain Shi470), this protein is Lipid-A-disaccharide synthase.